The primary structure comprises 147 residues: Membrane-spanning 4-domains subfamily A member 6E (147 aa).

Residues 1–52 (MTSQPISNETIIMLPSNVINFSQAEKPEPTNQGQDSLKKRLQAKVKVIGVHS) lie on the Cytoplasmic side of the membrane. A helical membrane pass occupies residues 53–73 (SLAGSILSALSALVGFILLSV). At 74–120 (NPAALNPASLQCKLDEKDIPTRLLLSYDYHSPYTMDCHRAKASLAGT) the chain is on the extracellular side. The helical transmembrane segment at 121 to 141 (LSLMLVSTVLEFCLAVLTAVL) threads the bilayer. The Cytoplasmic portion of the chain corresponds to 142–147 (QWKQTV).

The protein belongs to the MS4A family. In terms of tissue distribution, expressed by malignant and fetal tissue at very low levels.

The protein localises to the membrane. Its function is as follows. May be involved in signal transduction as a component of a multimeric receptor complex. The polypeptide is Membrane-spanning 4-domains subfamily A member 6E (MS4A6E) (Homo sapiens (Human)).